Here is a 247-residue protein sequence, read N- to C-terminus: MSCNGCRVLRKGCSENCILRPCIQWIESPEAQGHATVFVAKFFGRAGLMSFISAVPESQCPALFQSLLYEACGRTVNPVNGAVGLLWTGNWNVCQAAVETVLRGGSLKPIPELLNGGGFAGFPSPTSDEASEICTEMLNLRKADDSGDRNIYHHCRFSSSRSRSRSTASPPKRKRLSSEQQPSSELDLSLIPIYPIKTLPFKEDTPSMYSEESVTTVSFQNNNAGDRYVRCGGGGGGATTKLLNLFA.

The LOB domain occupies 1 to 107; that stretch reads MSCNGCRVLR…VETVLRGGSL (107 aa). Residues 157 to 170 are compositionally biased toward low complexity; the sequence is FSSSRSRSRSTASP. The interval 157-184 is disordered; it reads FSSSRSRSRSTASPPKRKRLSSEQQPSS.

Belongs to the LOB domain-containing protein family. As to expression, expressed in young shoots, roots, stems, leaves and flowers.

This Arabidopsis thaliana (Mouse-ear cress) protein is LOB domain-containing protein 38 (LBD38).